A 278-amino-acid polypeptide reads, in one-letter code: Neuronal membrane glycoprotein M6-a (278 aa).

An N-acetylmethionine modification is found at Met-1. Over 1–22 (MEENMEEGQTQKGCFECCIKCL) the chain is Cytoplasmic. The helical transmembrane segment at 23-43 (GGIPYASLIATILLYAGVALF) threads the bilayer. Topologically, residues 44–84 (CGCGHEALSGTVNILQTYFELARTAGDTLDVFTMIDIFKYV) are extracellular. Residues 85-105 (IYGIAAAFFVYGILLMVEGFF) form a helical membrane-spanning segment. Residues 106 to 127 (TTGAIKDLYGDFKITTCGRCVS) are Cytoplasmic-facing. A helical transmembrane segment spans residues 128 to 148 (AWFIMLTYLFMLAWLGVTAFT). Residues 149–213 (SLPVYMYFNV…STELNMTFHL (65 aa)) are Extracellular-facing. The N-linked (GlcNAc...) asparagine glycan is linked to Asn-164. Cys-174 and Cys-192 are joined by a disulfide. Asn-208 is a glycosylation site (N-linked (GlcNAc...) asparagine). A helical membrane pass occupies residues 214–234 (FIVALAGAGAAVIAMVHYLMV). Over 235–278 (LSANWAYVKDACRMQKYEDIKSKEEQELHDIHSTRSKERLNAYT) the chain is Cytoplasmic. Ser-256 bears the Phosphoserine mark. Thr-278 bears the Phosphothreonine mark.

It belongs to the myelin proteolipid protein family. As to quaternary structure, interacts with OPRM1. Interacts with palmitoyltransferase ZDHHC17/HIP14; the interaction leads to palmitoylation of GPM6A. N-glycosylated. In terms of processing, palmitoylated by ZDHHC17/HIP14. In terms of tissue distribution, widely expressed in the CNS. Found especially in the granule cell layer of the cerebellum but not in the molecular layer or white matter. Expressed in the immature embryonic retina including the nerve fiber layer (NFL), inner plexiform layer (IPL), and outer plexiform layer (OPL). Weakly expressed in processes of Mueller glia cells.

The protein resides in the cell membrane. The protein localises to the cell projection. It is found in the axon. It localises to the growth cone. Its subcellular location is the dendritic spine. The protein resides in the filopodium. The protein localises to the neuron projection. In terms of biological role, involved in neuronal differentiation, including differentiation and migration of neuronal stem cells. Plays a role in neuronal plasticity and is involved in neurite and filopodia outgrowth, filopodia motility and probably synapse formation. Gpm6a-induced filopodia formation involves mitogen-activated protein kinase (MAPK) and Src signaling pathways. Conflictingly, PubMed:22162747 reports that induced cellular protrusions are simple membrane-wrapped tubules without actin or tubulin-based cytoskeletons and with Gpm6a gliding along membrane edges indicative for a function in actin-independent membrane deformation. May be involved in neuronal NGF-dependent Ca(2+) influx. May be involved in regulation of endocytosis and intracellular trafficking of G-protein-coupled receptors (GPCRs); enhances internalization and recycling of mu-type opioid receptor. This chain is Neuronal membrane glycoprotein M6-a (Gpm6a), found in Mus musculus (Mouse).